Consider the following 168-residue polypeptide: Transcription antitermination protein NusB (168 aa).

This sequence belongs to the NusB family.

Its function is as follows. Involved in transcription antitermination. Required for transcription of ribosomal RNA (rRNA) genes. Binds specifically to the boxA antiterminator sequence of the ribosomal RNA (rrn) operons. The chain is Transcription antitermination protein NusB from Deinococcus deserti (strain DSM 17065 / CIP 109153 / LMG 22923 / VCD115).